The following is a 376-amino-acid chain: Endoplasmic reticulum-Golgi intermediate compartment protein 2 (376 aa).

The Cytoplasmic segment spans residues M1–G33. The chain crosses the membrane as a helical span at residues G34–V54. Residues Y55–C318 are Lumenal-facing. Residues G319–V339 traverse the membrane as a helical segment. Residues D340 to Q376 lie on the Cytoplasmic side of the membrane.

It belongs to the ERGIC family.

It localises to the endoplasmic reticulum-Golgi intermediate compartment membrane. The protein localises to the golgi apparatus. Its subcellular location is the cis-Golgi network membrane. The protein resides in the endoplasmic reticulum membrane. Possible role in transport between endoplasmic reticulum and Golgi. The chain is Endoplasmic reticulum-Golgi intermediate compartment protein 2 (ergic2) from Danio rerio (Zebrafish).